An 836-amino-acid chain; its full sequence is MAVVIRLLGLPFIAGPVDIRHFFKGLTIPDGGVHIIGGKVGEAFIIFATDEDARRAISRSGGFIKDSSVELFLSSKVEMQKTIEMKRTARVGRGRPGSGASGVGNVYHFSDALKEEESYSGYGSSVNRDAGFHTNGTGLDLRPRKTRPLKAENPYLFLRGLPYLVNEDDVRVFFSGLCVDGVILLKHHDGRNNGDAIVKFASCVDASGGLKCHRSFMGSRFIEVMQGSEQQWIEFGGTATEGGDTPRMRSEEHSPSRRINGRHFRKRSHSKSPRARSRSPLGFYVHLKNLSLNTNKRDLRNLFRDTDLTNDQIKFVYKDERRTRYAFVMFKNQKDYNTALGLHKTVLQYRPVLIDPVSRKEMVRIIECYEKKRPESLEKERPGRVSQKYSQEGFSGSGQKLCIYIRNLPFDVTKGEVQKFFADFSLVEDDIYLLCDDKGVGLGEALVRFKSEEQAMKAERLNRQRFLGIEVLLRLISEEQMQEFGVKSSWLSNERTQACSRSHDGDDCSCLFDLKDPSSCSFGQSESLRYHPKDLRKMGHFKHPQGYFRQSDRRSPEDFRHSPEDYRHPWEEHTSHSREEDWRLPLEDWKWSQEDDFRQCHEKDRRQLRSPWEEDFRRPSQEHFRRSYQEHIRQPPEEHFRRSREEDFRHVADEDFRQASDEDFRTSQEDLRYPTDEDFRRVSVEDLREVPEKDLRLPKNFRSPGEEFWTPPDFRGQHPFGNFDHLQGGKFDFEKYKFGSFPDAKVTSDLNLNCVSDKIIPVKISNLPFKANASEILDFFHGYKVIPDSVSLQYNEQGLPIGEAIVAMTNYNEALAAVKDLSGRPVGPRKVKLSLL.

The RRM 1 domain maps to 154-229; that stretch reads PYLFLRGLPY…RFIEVMQGSE (76 aa). The tract at residues 237-277 is disordered; sequence GTATEGGDTPRMRSEEHSPSRRINGRHFRKRSHSKSPRARS. Residues 244–255 are compositionally biased toward basic and acidic residues; that stretch reads DTPRMRSEEHSP. A compositionally biased stretch (basic residues) spans 259–277; sequence INGRHFRKRSHSKSPRARS. RRM domains lie at 283 to 359 and 401 to 478; these read FYVH…PVSR and LCIY…LISE. 2 disordered regions span residues 539–572 and 620–644; these read GHFKHPQGYFRQSDRRSPEDFRHSPEDYRHPWEE and SQEHFRRSYQEHIRQPPEEHFRRSR. The span at 550-572 shows a compositional bias: basic and acidic residues; sequence QSDRRSPEDFRHSPEDYRHPWEE. Ser-703 carries the phosphoserine modification. The residue at position 758 (Lys-758) is an N6-acetyllysine. The RRM 4 domain occupies 760–836; it reads IPVKISNLPF…GPRKVKLSLL (77 aa).

This is RNA-binding protein 12B-A (Rbm12b1) from Mus musculus (Mouse).